A 1203-amino-acid chain; its full sequence is Transmembrane channel-like protein 2 (1203 aa).

Disordered regions lie at residues 1 to 39 (MPKS…IDSR) and 64 to 90 (PHTR…EASK). Residues 73-86 (FDDDDDEFDEEDDK) are compositionally biased toward acidic residues. A helical membrane pass occupies residues 191–213 (VLGVNITITFIMCMFVVIPEWLA). Residue Asn225 is glycosylated (N-linked (GlcNAc...) asparagine). 6 helical membrane-spanning segments follow: residues 276-298 (YRVP…FIIL), 369-391 (FVAR…WAIM), 406-428 (ATAI…LGKI), 441-463 (LGRV…MLQL), 665-687 (MIWL…LIIL), and 714-736 (FFFA…VIAS). Asn748 carries N-linked (GlcNAc...) asparagine glycosylation. The chain crosses the membrane as a helical span at residues 780–802 (IIIPVLVLLSLVIYFLIAMVTGL). Disordered stretches follow at residues 826 to 908 (ELAG…SLPP), 927 to 1039 (KYGR…IEKQ), 1059 to 1087 (ATVE…HEPL), and 1112 to 1203 (NDET…SDND). Polar residues predominate over residues 865–874 (NRSTAKSVSG). The segment covering 898–908 (DSESTTSSLPP) has biased composition (low complexity). Over residues 927–945 (KYGRHDDIEMEEGGGRLRE) the composition is skewed to basic and acidic residues. Composition is skewed to low complexity over residues 973 to 997 (QSFD…PSNS) and 1022 to 1035 (SASS…PSSS). Polar residues predominate over residues 1061-1076 (VENSSQDPTRPPSTDD). 2 stretches are compositionally biased toward basic and acidic residues: residues 1133-1147 (SPRE…KDQQ) and 1172-1203 (PPSE…SDND).

It belongs to the TMC family.

The protein localises to the membrane. Its function is as follows. Probable ion channel. In Caenorhabditis elegans, this protein is Transmembrane channel-like protein 2 (tmc-2).